The primary structure comprises 241 residues: Tryptophan synthase alpha chain (241 aa).

Residues E31 and D42 each act as proton acceptor in the active site.

This sequence belongs to the TrpA family. Tetramer of two alpha and two beta chains.

The enzyme catalyses (1S,2R)-1-C-(indol-3-yl)glycerol 3-phosphate + L-serine = D-glyceraldehyde 3-phosphate + L-tryptophan + H2O. The protein operates within amino-acid biosynthesis; L-tryptophan biosynthesis; L-tryptophan from chorismate: step 5/5. Its function is as follows. The alpha subunit is responsible for the aldol cleavage of indoleglycerol phosphate to indole and glyceraldehyde 3-phosphate. The sequence is that of Tryptophan synthase alpha chain from Staphylococcus saprophyticus subsp. saprophyticus (strain ATCC 15305 / DSM 20229 / NCIMB 8711 / NCTC 7292 / S-41).